A 144-amino-acid chain; its full sequence is Large ribosomal subunit protein uL11 (144 aa).

The protein belongs to the universal ribosomal protein uL11 family. In terms of assembly, part of the ribosomal stalk of the 50S ribosomal subunit. Interacts with L10 and the large rRNA to form the base of the stalk. L10 forms an elongated spine to which L12 dimers bind in a sequential fashion forming a multimeric L10(L12)X complex. Post-translationally, one or more lysine residues are methylated.

Forms part of the ribosomal stalk which helps the ribosome interact with GTP-bound translation factors. In Streptomyces coelicolor (strain ATCC BAA-471 / A3(2) / M145), this protein is Large ribosomal subunit protein uL11.